The following is a 133-amino-acid chain: MTLNLCVLTPNRIVWDSEVKEIILSTNSGQIGILPNHAPIATAVDIGILRIRLNDQWLTMALMGGFARIGNNEITVLVNDAEKGSDIDPQEAQQTLEMAEANLSKAEGKRQTIEANLALRRARTRVEAINMMS.

This sequence belongs to the ATPase epsilon chain family. F-type ATPases have 2 components, CF(1) - the catalytic core - and CF(0) - the membrane proton channel. CF(1) has five subunits: alpha(3), beta(3), gamma(1), delta(1), epsilon(1). CF(0) has three main subunits: a, b and c.

Its subcellular location is the plastid. It is found in the chloroplast thylakoid membrane. Produces ATP from ADP in the presence of a proton gradient across the membrane. The polypeptide is ATP synthase epsilon chain, chloroplastic (Morus indica (Mulberry)).